The primary structure comprises 623 residues: Kelch repeat and BTB domain-containing protein 11 (623 aa).

Residues 1 to 129 form a disordered region; it reads MEHAVAPCVL…PEEPGEPAPV (129 aa). Low complexity predominate over residues 12 to 31; that stretch reads PGTEPGAAGESESEGAASPA. Polar residues predominate over residues 42-55; sequence CFSSGEESPPQSLA. Phosphoserine occurs at positions 64, 67, 87, and 107. Residues 79–91 show a composition bias toward low complexity; sequence EAGSAGAASPEEL. The region spanning 140 to 196 is the BTB domain; it reads PDLVLEVSGRRLRAHKAVLAARSDYFRARASRDVLRVQGVSLTALRLLLADAYSGRM. 4 Kelch repeats span residues 311 to 359, 360 to 412, 413 to 455, and 458 to 500; these read RPQS…VLYN, YLFV…ALDG, HLYA…ATTC, and EIYV…ALDG.

The protein is Kelch repeat and BTB domain-containing protein 11 (KBTBD11) of Homo sapiens (Human).